The chain runs to 130 residues: Small ribosomal subunit protein uS8 (130 aa).

Belongs to the universal ribosomal protein uS8 family. Part of the 30S ribosomal subunit. Contacts proteins S5 and S12.

In terms of biological role, one of the primary rRNA binding proteins, it binds directly to 16S rRNA central domain where it helps coordinate assembly of the platform of the 30S subunit. This chain is Small ribosomal subunit protein uS8, found in Shewanella frigidimarina (strain NCIMB 400).